Consider the following 757-residue polypeptide: Protein transport protein SEC23-2 (757 aa).

Zn(2+) is bound by residues Cys56, Cys61, Cys80, and Cys83.

Belongs to the SEC23/SEC24 family. SEC23 subfamily. The COPII coat is composed of at least 5 proteins: the SEC23/24 complex, the SEC13/31 complex, and the protein SAR1.

The protein resides in the cytoplasm. The protein localises to the cytoplasmic vesicle. It is found in the COPII-coated vesicle membrane. It localises to the endoplasmic reticulum membrane. Its subcellular location is the golgi apparatus membrane. Functionally, component of the coat protein complex II (COPII) which promotes the formation of transport vesicles from the endoplasmic reticulum (ER). The coat has two main functions, the physical deformation of the endoplasmic reticulum membrane into vesicles and the selection of cargo molecules. The protein is Protein transport protein SEC23-2 (SEC232) of Candida glabrata (strain ATCC 2001 / BCRC 20586 / JCM 3761 / NBRC 0622 / NRRL Y-65 / CBS 138) (Yeast).